The sequence spans 585 residues: Probable monoterpene synthase MTS1, chloroplastic (585 aa).

Positions 1 to 29 (MSLSGVPLSAGLAPSPSNKPTNGKGQNIV) are disordered. The N-terminal 31 residues, 1 to 31 (MSLSGVPLSAGLAPSPSNKPTNGKGQNIVRR), are a transit peptide targeting the chloroplast. Residues 15–25 (SPSNKPTNGKG) show a composition bias toward polar residues. (2E)-geranyl diphosphate-binding residues include R298, D335, D339, R476, and D479. Positions 335 and 339 each coordinate Mg(2+). The short motif at 335-339 (DDIYD) is the DDXXD motif element. Positions 479, 483, and 487 each coordinate Mg(2+).

Belongs to the terpene synthase family. Tpsb subfamily. Mg(2+) serves as cofactor. Mn(2+) is required as a cofactor. In terms of tissue distribution, expressed in trichomes. Detected in flowers, but not in leaves.

The protein localises to the plastid. It localises to the chloroplast. The sequence is that of Probable monoterpene synthase MTS1, chloroplastic from Humulus lupulus (European hop).